Reading from the N-terminus, the 160-residue chain is MATLSPEKFSGSPISISKEFPQQKMREIILQMLYALDMAPSAEDSLVPLLMSQTAVSQKHVLVALNQTKSILEKSQELDLIIGNALKNKSFDSLDLVEKNVLRLTLFEHFYSPPINKAILIAEAIRLVKKFSYSEACPFIQAILNDIFTDSSLNENSLSI.

It belongs to the NusB family.

In terms of biological role, involved in transcription antitermination. Required for transcription of ribosomal RNA (rRNA) genes. Binds specifically to the boxA antiterminator sequence of the ribosomal RNA (rrn) operons. This Chlamydia pneumoniae (Chlamydophila pneumoniae) protein is Transcription antitermination protein NusB.